The following is a 100-amino-acid chain: Urease subunit gamma (100 aa).

The protein belongs to the urease gamma subunit family. Heterotrimer of UreA (gamma), UreB (beta) and UreC (alpha) subunits. Three heterotrimers associate to form the active enzyme.

The protein resides in the cytoplasm. The enzyme catalyses urea + 2 H2O + H(+) = hydrogencarbonate + 2 NH4(+). It functions in the pathway nitrogen metabolism; urea degradation; CO(2) and NH(3) from urea (urease route): step 1/1. The polypeptide is Urease subunit gamma (Mycolicibacterium smegmatis (strain ATCC 700084 / mc(2)155) (Mycobacterium smegmatis)).